A 40-amino-acid polypeptide reads, in one-letter code: Photosystem II reaction center protein J (40 aa).

Residues 8 to 28 (IPLWLIGTVAGIPVIGLVGVF) traverse the membrane as a helical segment.

It belongs to the PsbJ family. In terms of assembly, PSII is composed of 1 copy each of membrane proteins PsbA, PsbB, PsbC, PsbD, PsbE, PsbF, PsbH, PsbI, PsbJ, PsbK, PsbL, PsbM, PsbT, PsbX, PsbY, PsbZ, Psb30/Ycf12, at least 3 peripheral proteins of the oxygen-evolving complex and a large number of cofactors. It forms dimeric complexes.

The protein resides in the plastid. It localises to the chloroplast thylakoid membrane. Functionally, one of the components of the core complex of photosystem II (PSII). PSII is a light-driven water:plastoquinone oxidoreductase that uses light energy to abstract electrons from H(2)O, generating O(2) and a proton gradient subsequently used for ATP formation. It consists of a core antenna complex that captures photons, and an electron transfer chain that converts photonic excitation into a charge separation. In Hordeum jubatum (Foxtail barley), this protein is Photosystem II reaction center protein J.